The following is a 373-amino-acid chain: Dual-specificity RNA methyltransferase RlmN (373 aa).

Residue Glu94 is the Proton acceptor of the active site. In terms of domain architecture, Radical SAM core spans Glu100 to Asp339. The cysteines at positions 107 and 344 are disulfide-linked. [4Fe-4S] cluster contacts are provided by Cys114, Cys118, and Cys121. Residues Gly168–Glu169, Ser200, Ser222–His224, and Asn301 contribute to the S-adenosyl-L-methionine site. The S-methylcysteine intermediate role is filled by Cys344.

The protein belongs to the radical SAM superfamily. RlmN family. [4Fe-4S] cluster serves as cofactor.

Its subcellular location is the cytoplasm. It catalyses the reaction adenosine(2503) in 23S rRNA + 2 reduced [2Fe-2S]-[ferredoxin] + 2 S-adenosyl-L-methionine = 2-methyladenosine(2503) in 23S rRNA + 5'-deoxyadenosine + L-methionine + 2 oxidized [2Fe-2S]-[ferredoxin] + S-adenosyl-L-homocysteine. It carries out the reaction adenosine(37) in tRNA + 2 reduced [2Fe-2S]-[ferredoxin] + 2 S-adenosyl-L-methionine = 2-methyladenosine(37) in tRNA + 5'-deoxyadenosine + L-methionine + 2 oxidized [2Fe-2S]-[ferredoxin] + S-adenosyl-L-homocysteine. Specifically methylates position 2 of adenine 2503 in 23S rRNA and position 2 of adenine 37 in tRNAs. m2A2503 modification seems to play a crucial role in the proofreading step occurring at the peptidyl transferase center and thus would serve to optimize ribosomal fidelity. This Shewanella frigidimarina (strain NCIMB 400) protein is Dual-specificity RNA methyltransferase RlmN.